The primary structure comprises 295 residues: Protease HtpX (295 aa).

Transmembrane regions (helical) follow at residues 4-24 (ILLF…TLSL) and 42-62 (QLLI…LFIS). Residue H147 participates in Zn(2+) binding. Residue E148 is part of the active site. A Zn(2+)-binding site is contributed by H151. A run of 2 helical transmembrane segments spans residues 158–178 (VTLA…ARII) and 199–219 (VATI…VMWF). E224 contacts Zn(2+).

The protein belongs to the peptidase M48B family. Requires Zn(2+) as cofactor.

It localises to the cell inner membrane. In Pseudomonas fluorescens (strain ATCC BAA-477 / NRRL B-23932 / Pf-5), this protein is Protease HtpX.